The following is an 89-amino-acid chain: Late cornified envelope protein 3A (89 aa).

2 stretches are compositionally biased toward low complexity: residues 1 to 10 (MSCQQNQQQC) and 17 to 46 (PAKS…SERS). 2 disordered regions span residues 1–46 (MSCQ…SERS) and 62–89 (CQSS…AGCC).

Belongs to the LCE family. Interacts with CYSRT1; the interaction is direct. Skin-specific. Expression was readily detected in adult trunk skin, adult arm skin, fetal skin, penal skin, vulva, esophagus and tongue. Not expressed in the cervix, rectum, lung, colon, or placenta.

A structural component of the cornified envelope of the stratum corneum involved in innate cutaneous host defense. Possesses defensin-like antimicrobial activity against a broad spectrum of Gram-positive and Gram-negative bacteria, both aerobic and anaerobic species. Upon inflammation, may regulate skin barrier repair by shaping cutaneous microbiota composition and immune response to bacterial antigens. The chain is Late cornified envelope protein 3A from Homo sapiens (Human).